Consider the following 434-residue polypeptide: Ribosomal protein uS12 methylthiotransferase RimO (434 aa).

Residues 6-122 (SKLYLLTLGC…IIAELGGHYK (117 aa)) enclose the MTTase N-terminal domain. [4Fe-4S] cluster is bound by residues Cys-15, Cys-51, Cys-85, Cys-146, Cys-150, and Cys-153. Residues 132–361 (LTPPYFSYLK…MAAQEEIAYA (230 aa)) form the Radical SAM core domain. One can recognise a TRAM domain in the interval 364-434 (QALVGSFMPV…AFDLFGSLVL (71 aa)).

Belongs to the methylthiotransferase family. RimO subfamily. The cofactor is [4Fe-4S] cluster.

It is found in the cytoplasm. It carries out the reaction L-aspartate(89)-[ribosomal protein uS12]-hydrogen + (sulfur carrier)-SH + AH2 + 2 S-adenosyl-L-methionine = 3-methylsulfanyl-L-aspartate(89)-[ribosomal protein uS12]-hydrogen + (sulfur carrier)-H + 5'-deoxyadenosine + L-methionine + A + S-adenosyl-L-homocysteine + 2 H(+). In terms of biological role, catalyzes the methylthiolation of an aspartic acid residue of ribosomal protein uS12. The chain is Ribosomal protein uS12 methylthiotransferase RimO from Chloroherpeton thalassium (strain ATCC 35110 / GB-78).